The chain runs to 615 residues: Alpha-terpinene synthase TPS33PK, chloroplastic (615 aa).

The N-terminal 33 residues, 1 to 33 (MFCRLGVHQFSPLSLILNTTKLARASTLSSACY), are a transit peptide targeting the chloroplast. 5 residues coordinate (2E)-geranyl diphosphate: E334, V371, L375, L513, and S516. V371 and L375 together coordinate Mg(2+). The DDXXD motif motif lies at 371–375 (VYGTL). Mg(2+) contacts are provided by S516, M520, and D524.

Belongs to the terpene synthase family. Tpsb subfamily. Mg(2+) serves as cofactor. Mn(2+) is required as a cofactor.

It is found in the plastid. It localises to the chloroplast. The enzyme catalyses (2E)-geranyl diphosphate = alpha-terpinene + diphosphate. It catalyses the reaction (2E)-geranyl diphosphate = gamma-terpinene + diphosphate. It functions in the pathway secondary metabolite biosynthesis; terpenoid biosynthesis. Involved in monoterpene (C10) olefins biosynthesis, constituants of cannabinoids and terpenoids-rich resins. Catalyzes mainly the conversion of (2E)-geranyl diphosphate to alpha-terpinene and gamma-terpinene. The sequence is that of Alpha-terpinene synthase TPS33PK, chloroplastic from Cannabis sativa (Hemp).